A 118-amino-acid polypeptide reads, in one-letter code: Large ribosomal subunit protein uL18 (118 aa).

It belongs to the universal ribosomal protein uL18 family. Part of the 50S ribosomal subunit; part of the 5S rRNA/L5/L18/L25 subcomplex. Contacts the 5S and 23S rRNAs.

This is one of the proteins that bind and probably mediate the attachment of the 5S RNA into the large ribosomal subunit, where it forms part of the central protuberance. The chain is Large ribosomal subunit protein uL18 from Phenylobacterium zucineum (strain HLK1).